Consider the following 150-residue polypeptide: Large ribosomal subunit protein eL19 (150 aa).

Positions 55–89 are disordered; it reads IKGQSRYRAKIRHEQKKKGRHRGPGSRKGKKTARM.

It belongs to the eukaryotic ribosomal protein eL19 family. As to quaternary structure, part of the 50S ribosomal subunit.

Its function is as follows. Binds to the 23S rRNA. This chain is Large ribosomal subunit protein eL19, found in Pyrococcus furiosus (strain ATCC 43587 / DSM 3638 / JCM 8422 / Vc1).